The following is a 106-amino-acid chain: Small ribosomal subunit protein uS10 (106 aa).

It belongs to the universal ribosomal protein uS10 family. Part of the 30S ribosomal subunit.

In terms of biological role, involved in the binding of tRNA to the ribosomes. The protein is Small ribosomal subunit protein uS10 of Wolbachia pipientis subsp. Culex pipiens (strain wPip).